The primary structure comprises 338 residues: D-alanine--D-alanine ligase (338 aa).

In terms of domain architecture, ATP-grasp spans 120-324 (KRVMLAEGLP…YEDLCIEVLK (205 aa)). ATP is bound at residue 150–205 (PDKLGLPLIVKPAREGSSIGLTKVTERAGMADAVAQAEKLDADILCEQFISGDEVT). D277, E291, and N293 together coordinate Mg(2+).

This sequence belongs to the D-alanine--D-alanine ligase family. Mg(2+) is required as a cofactor. Requires Mn(2+) as cofactor.

The protein resides in the cytoplasm. It carries out the reaction 2 D-alanine + ATP = D-alanyl-D-alanine + ADP + phosphate + H(+). The protein operates within cell wall biogenesis; peptidoglycan biosynthesis. In terms of biological role, cell wall formation. The polypeptide is D-alanine--D-alanine ligase (Polaromonas sp. (strain JS666 / ATCC BAA-500)).